A 338-amino-acid chain; its full sequence is Ketol-acid reductoisomerase (NADP(+)) (338 aa).

Residues 1 to 181 form the KARI N-terminal Rossmann domain; that stretch reads MKVFYDKDAD…GGGRAGIIET (181 aa). NADP(+) contacts are provided by residues 24-27, Arg-47, and Ser-52; that span reads YGSQ. His-107 is a catalytic residue. Gly-133 serves as a coordination point for NADP(+). The KARI C-terminal knotted domain maps to 182-327; that stretch reads NFREETETDL…SKLRAMMPWI (146 aa). Mg(2+) is bound by residues Asp-190, Glu-194, Glu-226, and Glu-230. Residue Ser-251 coordinates substrate.

It belongs to the ketol-acid reductoisomerase family. The cofactor is Mg(2+).

It catalyses the reaction (2R)-2,3-dihydroxy-3-methylbutanoate + NADP(+) = (2S)-2-acetolactate + NADPH + H(+). The enzyme catalyses (2R,3R)-2,3-dihydroxy-3-methylpentanoate + NADP(+) = (S)-2-ethyl-2-hydroxy-3-oxobutanoate + NADPH + H(+). The protein operates within amino-acid biosynthesis; L-isoleucine biosynthesis; L-isoleucine from 2-oxobutanoate: step 2/4. Its pathway is amino-acid biosynthesis; L-valine biosynthesis; L-valine from pyruvate: step 2/4. In terms of biological role, involved in the biosynthesis of branched-chain amino acids (BCAA). Catalyzes an alkyl-migration followed by a ketol-acid reduction of (S)-2-acetolactate (S2AL) to yield (R)-2,3-dihydroxy-isovalerate. In the isomerase reaction, S2AL is rearranged via a Mg-dependent methyl migration to produce 3-hydroxy-3-methyl-2-ketobutyrate (HMKB). In the reductase reaction, this 2-ketoacid undergoes a metal-dependent reduction by NADPH to yield (R)-2,3-dihydroxy-isovalerate. This Burkholderia mallei (strain NCTC 10229) protein is Ketol-acid reductoisomerase (NADP(+)).